Consider the following 412-residue polypeptide: MKIYLVGGAVRDALLGLPVKDRDWVVVGSTPQEMLDAGYQQVGRDFPVFLHPQTHEEYALARTERKSGSGYTGFTCYAAPDVTLEDDLKRRDLTINALAQDDNGEIIDPYNGLGDLQNRLLRHVSPAFGEDPLRVLRVARFAARYAHLGFRIADETLALMREMTHAGELEHLTPERVWKETESALTTRNPQVFFQVLRDCGALRVLFPEIDALFGVPAPAKWHPEIDTGIHTLMTLSMAAMLSPQVDVRFATLCHDLGKGLTPPELWPRHHGHGPAGVKLVEQLCQRLRVPNEIRDLARLVAEFHDLIHTFPMLNPKTIVKLFDSIDAWRKPQRVEQLALTSEADVRGRTGFESADYPQGRWLREAWEVAQSVPTKAVVEAGFKGVEIREELTRRRIAAVASWKEQRCPKPE.

2 residues coordinate ATP: Gly8 and Arg11. Residues Gly8 and Arg11 each coordinate CTP. Residues Asp21 and Asp23 each contribute to the Mg(2+) site. The ATP site is built by Arg91, Arg137, and Arg140. Arg91, Arg137, and Arg140 together coordinate CTP. The HD domain maps to 228-329 (TGIHTLMTLS…VKLFDSIDAW (102 aa)).

Belongs to the tRNA nucleotidyltransferase/poly(A) polymerase family. Bacterial CCA-adding enzyme type 1 subfamily. Monomer. Can also form homodimers and oligomers. Mg(2+) serves as cofactor. Ni(2+) is required as a cofactor.

The enzyme catalyses a tRNA precursor + 2 CTP + ATP = a tRNA with a 3' CCA end + 3 diphosphate. The catalysed reaction is a tRNA with a 3' CCA end + 2 CTP + ATP = a tRNA with a 3' CCACCA end + 3 diphosphate. Catalyzes the addition and repair of the essential 3'-terminal CCA sequence in tRNAs without using a nucleic acid template. Adds these three nucleotides in the order of C, C, and A to the tRNA nucleotide-73, using CTP and ATP as substrates and producing inorganic pyrophosphate. tRNA 3'-terminal CCA addition is required both for tRNA processing and repair. Also involved in tRNA surveillance by mediating tandem CCA addition to generate a CCACCA at the 3' terminus of unstable tRNAs. While stable tRNAs receive only 3'-terminal CCA, unstable tRNAs are marked with CCACCA and rapidly degraded. The sequence is that of Multifunctional CCA protein from Escherichia coli (strain K12 / MC4100 / BW2952).